Here is a 314-residue protein sequence, read N- to C-terminus: Thymidylate synthase (314 aa).

DUMP is bound by residues arginine 21 and 176 to 177 (RR). Residue cysteine 196 is the Nucleophile of the active site. DUMP-binding positions include 216–219 (RSAD), asparagine 227, and 257–259 (HLY). Aspartate 219 is a binding site for (6R)-5,10-methylene-5,6,7,8-tetrahydrofolate. Residue serine 313 coordinates (6R)-5,10-methylene-5,6,7,8-tetrahydrofolate.

The protein belongs to the thymidylate synthase family. Bacterial-type ThyA subfamily. As to quaternary structure, homodimer.

The protein resides in the cytoplasm. The enzyme catalyses dUMP + (6R)-5,10-methylene-5,6,7,8-tetrahydrofolate = 7,8-dihydrofolate + dTMP. It participates in pyrimidine metabolism; dTTP biosynthesis. In terms of biological role, catalyzes the reductive methylation of 2'-deoxyuridine-5'-monophosphate (dUMP) to 2'-deoxythymidine-5'-monophosphate (dTMP) while utilizing 5,10-methylenetetrahydrofolate (mTHF) as the methyl donor and reductant in the reaction, yielding dihydrofolate (DHF) as a by-product. This enzymatic reaction provides an intracellular de novo source of dTMP, an essential precursor for DNA biosynthesis. In Listeria monocytogenes serotype 4b (strain CLIP80459), this protein is Thymidylate synthase.